Reading from the N-terminus, the 417-residue chain is E3 ubiquitin-protein ligase RNF135 (417 aa).

The RING-type zinc finger occupies 21-67 (CIICQGLLDQPTTLPCGHSFCLRCLHDLWVSKRGAVDGCPWACPICR). Disordered regions lie at residues 95–118 (EVEA…TVQK) and 143–173 (TQRP…SLDS). 2 coiled-coil regions span residues 121-145 (TNVI…QTQR) and 180-204 (SISQ…QGSV). Polar residues predominate over residues 143–164 (TQRPNLGSGQDNAQGTPPTDSS). Residues 225-417 (PDQRRPAPRK…NYLEIKQLNT (193 aa)) form the B30.2/SPRY domain.

Homodimer. Interacts (homodimer) with RIGI (double-stranded RNA-bound oligomeric form); involved in both RIGI ubiquitination, oligomerization into filaments associated with viral RNAs and the bridging of these filaments. Interacts with UBE2D3 and UBE2N; E2 ubiquitin ligases involved in RNF135-mediated ubiquitination of RIGI and activation of the RIG-I signaling pathway. Interacts with PCBP2. As to expression, ubiquitously expressed.

It localises to the cytoplasm. The protein resides in the stress granule. The catalysed reaction is S-ubiquitinyl-[E2 ubiquitin-conjugating enzyme]-L-cysteine + [acceptor protein]-L-lysine = [E2 ubiquitin-conjugating enzyme]-L-cysteine + N(6)-ubiquitinyl-[acceptor protein]-L-lysine.. The protein operates within protein modification; protein ubiquitination. Functionally, E2-dependent E3 ubiquitin-protein ligase that functions as a RIGI coreceptor in the sensing of viral RNAs in cell cytoplasm and the activation of the antiviral innate immune response. Together with the UBE2D3, UBE2N and UB2V1 E2 ligases, catalyzes the 'Lys-63'-linked polyubiquitination of RIGI oligomerized on viral RNAs, an essential step in the activation of the RIG-I signaling pathway. Through a ubiquitin-independent parallel mechanism, which consists in bridging RIGI filaments forming on longer viral RNAs, further activates the RIG-I signaling pathway. This second mechanism that synergizes with the ubiquitin-dependent one would thereby allow an RNA length-dependent regulation of the RIG-I signaling pathway. Associated with the E2 ligase UBE2N, also constitutively synthesizes unanchored 'Lys-63'-linked polyubiquitin chains that may also activate the RIG-I signaling pathway. It is not involved in the innate immune response against DNA viruses. The protein is E3 ubiquitin-protein ligase RNF135 of Mus musculus (Mouse).